A 459-amino-acid chain; its full sequence is Hypotaurine/taurine--pyruvate aminotransferase (459 aa).

N6-(pyridoxal phosphate)lysine is present on Lys287.

It belongs to the class-III pyridoxal-phosphate-dependent aminotransferase family. Pyridoxal 5'-phosphate serves as cofactor.

It catalyses the reaction hypotaurine + pyruvate = 2-sulfinoacetaldehyde + L-alanine. The enzyme catalyses taurine + pyruvate = sulfoacetaldehyde + L-alanine. Its pathway is organosulfur degradation. Converts hypotaurine to alanine and sulfinoacetaldehyde, which desulfinates spontaneously to acetaldehyde and sulfite. Can also catalyze the degradation of taurine into alanine and sulfoacetaldehyde, which is stable. Has 2-fold higher aminotransferase activity with hypotaurine as the substrate. In Paracoccus denitrificans (strain Pd 1222), this protein is Hypotaurine/taurine--pyruvate aminotransferase.